The primary structure comprises 377 residues: MSSCSVVNLAKQLISIPSISPMDLGCQKLISDRLINIGFSVENMNVNQTNNMWAYKGSGTTLAFSGHTDVVPIGNKILWNSPPFSPTVDKGVLFGRGSADMKGALAAMVIAVERFVKKQPDHHGRIAFLITSDEESMAHDGTIKIVSNLIKRKENIDYCIIGEPSSEQKLGDVIKNGRRGSITAYLCIYGVQGHIAYPNFSDNPIHKSISFFCTLISNCWDNGNVFFSPTSVQIYDIESKSSSDNMVPSELTVKFNFRFSNEITSSDIKKKVELLLKHFNLKYSIEWHVSGNPFLTKVGLLSDIVVRSVEELCHISPNLSTSGGTSDGRFIAELGSQIIELGLINKTIHKANECVEIKDLRLLCHLYECIITKIFEK.

Histidine 67 contributes to the Zn(2+) binding site. The active site involves aspartate 69. Aspartate 100 is a binding site for Zn(2+). Glutamate 134 functions as the Proton acceptor in the catalytic mechanism. 3 residues coordinate Zn(2+): glutamate 135, glutamate 163, and histidine 349.

This sequence belongs to the peptidase M20A family. DapE subfamily. In terms of assembly, homodimer. It depends on Zn(2+) as a cofactor. Co(2+) is required as a cofactor.

The catalysed reaction is N-succinyl-(2S,6S)-2,6-diaminopimelate + H2O = (2S,6S)-2,6-diaminopimelate + succinate. Its pathway is amino-acid biosynthesis; L-lysine biosynthesis via DAP pathway; LL-2,6-diaminopimelate from (S)-tetrahydrodipicolinate (succinylase route): step 3/3. Functionally, catalyzes the hydrolysis of N-succinyl-L,L-diaminopimelic acid (SDAP), forming succinate and LL-2,6-diaminopimelate (DAP), an intermediate involved in the bacterial biosynthesis of lysine and meso-diaminopimelic acid, an essential component of bacterial cell walls. The polypeptide is Succinyl-diaminopimelate desuccinylase (Buchnera aphidicola subsp. Baizongia pistaciae (strain Bp)).